The sequence spans 150 residues: Viral late gene transcription factor 2 (150 aa).

It belongs to the orthopoxvirus VLTF-2/OPG126 family. Interacts with the late transcription elongation factor VLTF-4/OPG110. Interacts with the late transcription factors VLTF-1/OPG093.

Acts with RNA polymerase to initiate transcription from late gene promoters. This is Viral late gene transcription factor 2 (OPG126) from Monkeypox virus.